Reading from the N-terminus, the 43-residue chain is Protein PsbN (43 aa).

The helical transmembrane segment at 4 to 24 (ATIIVIFVSSLLLGITAYSIY) threads the bilayer.

This sequence belongs to the PsbN family.

The protein resides in the plastid. Its subcellular location is the chloroplast thylakoid membrane. Functionally, may play a role in photosystem I and II biogenesis. The sequence is that of Protein PsbN from Trieres chinensis (Marine centric diatom).